A 139-amino-acid polypeptide reads, in one-letter code: Sec-independent protein translocase protein TatB (139 aa).

The chain crosses the membrane as a helical span at residues Met1 to Gly21. The disordered stretch occupies residues Leu69–Pro139. Over residues Met80–Pro95 the composition is skewed to pro residues.

It belongs to the TatB family. In terms of assembly, the Tat system comprises two distinct complexes: a TatABC complex, containing multiple copies of TatA, TatB and TatC subunits, and a separate TatA complex, containing only TatA subunits. Substrates initially bind to the TatABC complex, which probably triggers association of the separate TatA complex to form the active translocon.

It is found in the cell inner membrane. Functionally, part of the twin-arginine translocation (Tat) system that transports large folded proteins containing a characteristic twin-arginine motif in their signal peptide across membranes. Together with TatC, TatB is part of a receptor directly interacting with Tat signal peptides. TatB may form an oligomeric binding site that transiently accommodates folded Tat precursor proteins before their translocation. The chain is Sec-independent protein translocase protein TatB from Stutzerimonas stutzeri (strain A1501) (Pseudomonas stutzeri).